We begin with the raw amino-acid sequence, 354 residues long: D-alanine--D-alanine ligase (354 aa).

The region spanning K140–M344 is the ATP-grasp domain. A170–E225 contributes to the ATP binding site. Mg(2+)-binding residues include D298, E311, and N313.

It belongs to the D-alanine--D-alanine ligase family. Requires Mg(2+) as cofactor. Mn(2+) is required as a cofactor.

Its subcellular location is the cytoplasm. The catalysed reaction is 2 D-alanine + ATP = D-alanyl-D-alanine + ADP + phosphate + H(+). It functions in the pathway cell wall biogenesis; peptidoglycan biosynthesis. Cell wall formation. The polypeptide is D-alanine--D-alanine ligase (Blochmanniella floridana).